Consider the following 1195-residue polypeptide: Voltage-gated inwardly rectifying potassium channel KCNH7 (1195 aa).

The Cytoplasmic portion of the chain corresponds to Met1–Trp412. The PAS domain occupies Ile41–His70. The PAC domain occupies Arg92 to Val144. A Phosphoserine modification is found at Ser174. The interval Ser194 to Thr216 is disordered. Residues Ser238 and Ser319 each carry the phosphoserine modification. The chain crosses the membrane as a helical span at residues Leu413–Leu433. The Extracellular segment spans residues Asn434–Ser449. The helical transmembrane segment at Pro450 to Phe470 threads the bilayer. At Arg471–Lys494 the chain is on the cytoplasmic side. Residues Gly495–Gly515 traverse the membrane as a helical segment. The Extracellular portion of the chain corresponds to Ser516–Thr521. Residues Leu522 to Asp542 form a helical; Voltage-sensor membrane-spanning segment. Residues Arg543 to Ala549 lie on the Cytoplasmic side of the membrane. Residues Ala550–Trp570 traverse the membrane as a helical segment. At Tyr571 to Tyr614 the chain is on the extracellular side. Asn600 is a glycosylation site (N-linked (GlcNAc...) asparagine). The segment at residues Val615 to Pro635 is an intramembrane region (pore-forming). The Selectivity filter signature appears at Ser627–Asn632. The Extracellular portion of the chain corresponds to Asn636–Lys641. The helical transmembrane segment at Ile642–Val662 threads the bilayer. Over Ser663–Lys1195 the chain is Cytoplasmic. The interval Ala745–Leu845 is cNMP-binding domain. The tract at residues Ala870–Thr915 is disordered. Over residues Leu890–Lys902 the composition is skewed to basic and acidic residues. 2 positions are modified to phosphoserine: Ser891 and Ser894. Residues Tyr1027–Ala1054 adopt a coiled-coil conformation.

It belongs to the potassium channel family. H (Eag) (TC 1.A.1.20) subfamily. Kv11.3/KCNH7 sub-subfamily. In terms of assembly, the potassium channel is probably composed of a homo- or heterotetrameric complex of pore-forming alpha subunits that can associate only within their subfamily.

Its subcellular location is the cell membrane. It catalyses the reaction K(+)(in) = K(+)(out). Pore-forming (alpha) subunit of voltage-gated inwardly rectifying potassium channel. Exhibits faster activation and deactivation kinetics and slow inactivation at membrane potentials positive to 240 mV, resulting in the weakest inward rectification. The chain is Voltage-gated inwardly rectifying potassium channel KCNH7 from Mus musculus (Mouse).